A 621-amino-acid chain; its full sequence is Protein Tra (621 aa).

Residues 126–146 form a helical membrane-spanning segment; the sequence is GAWPVAGSLALIAANVAALVI. In terms of domain architecture, FtsK spans 275-465; sequence GEPVQVPLGR…LALSTSGESR (191 aa). 290–297 contributes to the ATP binding site; the sequence is GTSGSGKS. A helical membrane pass occupies residues 564–584; the sequence is VAAAIGTGATTVADVATVTGI.

The protein localises to the cell membrane. Major protein required for plasmid transfer. This Streptomyces lividans protein is Protein Tra (tra).